The sequence spans 77 residues: Large ribosomal subunit protein eL14 (77 aa).

It belongs to the eukaryotic ribosomal protein eL14 family.

In Methanococcus maripaludis (strain C6 / ATCC BAA-1332), this protein is Large ribosomal subunit protein eL14.